The primary structure comprises 580 residues: Purine permease (580 aa).

A run of 12 helical transmembrane segments spans residues 68–88 (PLVLALLLGLQHALAMLAGVI), 107–127 (SQYLVSTSLIVSGLLSAVQMF), 136–156 (YYVGTGLVSVVGTSFATITVA), 184–204 (YGALLATSCLCSLLEIGLSFM), 211–231 (ALFPPIVTGPTVFLIGASLIG), 263–283 (LPWGSAEFIGLGFLVFATIIL), 294–314 (SCAVIVGLLVGCIVAAACGYF), 385–405 (LGNGITCLLAGLCTITPMSVF), 426–446 (CCFFLVVMGIFAKFAAALVAI), 447–467 (PSSVLGGMTTFLFSSVAISGV), 481–501 (FILTASFAVGMAATLVPDWFS), and 522–542 (LVMANGFAVTGFLGLLLNLIL).

This sequence belongs to the nucleobase:cation symporter-2 (NCS2) (TC 2.A.40) family.

It is found in the membrane. Able to transport with low efficiency all natural purines as well as purine analogs. The polypeptide is Purine permease (uapC) (Emericella nidulans (strain FGSC A4 / ATCC 38163 / CBS 112.46 / NRRL 194 / M139) (Aspergillus nidulans)).